We begin with the raw amino-acid sequence, 173 residues long: NADH-ubiquinone oxidoreductase chain 6 (173 aa).

Transmembrane regions (helical) follow at residues 24–44 (AMGL…GMFV), 47–67 (FWFS…LFIY), 81–101 (MKLF…SFFF), and 142–162 (LITL…VKIT).

The protein belongs to the complex I subunit 6 family.

The protein resides in the mitochondrion membrane. The enzyme catalyses a ubiquinone + NADH + 5 H(+)(in) = a ubiquinol + NAD(+) + 4 H(+)(out). Its function is as follows. Core subunit of the mitochondrial membrane respiratory chain NADH dehydrogenase (Complex I) that is believed to belong to the minimal assembly required for catalysis. Complex I functions in the transfer of electrons from NADH to the respiratory chain. The immediate electron acceptor for the enzyme is believed to be ubiquinone. The chain is NADH-ubiquinone oxidoreductase chain 6 from Aedes aegypti (Yellowfever mosquito).